The chain runs to 1488 residues: Chromosome partition protein MukB (1488 aa).

An ATP-binding site is contributed by 34 to 41 (GGNGAGKS). Coiled-coil stretches lie at residues 326-418 (LEAD…QYNQ), 444-472 (LDTF…QTAH), and 509-602 (RHLA…QRAP). Positions 666–783 (PGGAEDQRLN…SLPIFGRAAR (118 aa)) are flexible hinge. Coiled-coil stretches lie at residues 835-923 (EAEI…AKLE), 977-1116 (EMLS…AKAG), and 1209-1265 (VEAI…LQSV). Residues 1049–1074 (ADSGAEERARQRRDELHAQLSNNRSR) form a disordered region. The segment covering 1051–1065 (SGAEERARQRRDELH) has biased composition (basic and acidic residues).

This sequence belongs to the SMC family. MukB subfamily. As to quaternary structure, homodimerization via its hinge domain. Binds to DNA via its C-terminal region. Interacts, and probably forms a ternary complex, with MukE and MukF via its C-terminal region. The complex formation is stimulated by calcium or magnesium. Interacts with tubulin-related protein FtsZ.

It is found in the cytoplasm. The protein resides in the nucleoid. In terms of biological role, plays a central role in chromosome condensation, segregation and cell cycle progression. Functions as a homodimer, which is essential for chromosome partition. Involved in negative DNA supercoiling in vivo, and by this means organize and compact chromosomes. May achieve or facilitate chromosome segregation by condensation DNA from both sides of a centrally located replisome during cell division. The sequence is that of Chromosome partition protein MukB from Salmonella typhi.